Consider the following 231-residue polypeptide: Putative 3-methyladenine DNA glycosylase (231 aa).

Belongs to the DNA glycosylase MPG family.

The chain is Putative 3-methyladenine DNA glycosylase from Pseudomonas fluorescens (strain Pf0-1).